The following is a 256-amino-acid chain: ATP synthase peripheral stalk subunit b, mitochondrial (256 aa).

The N-terminal 42 residues, 1–42 (MLSRVVLSAAATAAPSLKNAAFLGPGVLQATRTFHTGQPHLV), are a transit peptide targeting the mitochondrion. An N6-succinyllysine modification is found at K131. 6 positions are modified to N6-acetyllysine: K139, K154, K162, K221, K233, and K244.

The protein belongs to the eukaryotic ATPase B chain family. As to quaternary structure, component of the ATP synthase complex composed at least of ATP5F1A/subunit alpha, ATP5F1B/subunit beta, ATP5MC1/subunit c (homooctomer), MT-ATP6/subunit a, MT-ATP8/subunit 8, ATP5ME/subunit e, ATP5MF/subunit f, ATP5MG/subunit g, ATP5MK/subunit k, ATP5MJ/subunit j, ATP5F1C/subunit gamma, ATP5F1D/subunit delta, ATP5F1E/subunit epsilon, ATP5PF/subunit F6, ATP5PB/subunit b, ATP5PD/subunit d, ATP5PO/subunit OSCP. ATP synthase complex consists of a soluble F(1) head domain (subunits alpha(3) and beta(3)) - the catalytic core - and a membrane F(0) domain - the membrane proton channel (subunits c, a, 8, e, f, g, k and j). These two domains are linked by a central stalk (subunits gamma, delta, and epsilon) rotating inside the F1 region and a stationary peripheral stalk (subunits F6, b, d, and OSCP).

Its subcellular location is the mitochondrion. It is found in the mitochondrion inner membrane. In terms of biological role, subunit b, of the mitochondrial membrane ATP synthase complex (F(1)F(0) ATP synthase or Complex V) that produces ATP from ADP in the presence of a proton gradient across the membrane which is generated by electron transport complexes of the respiratory chain. ATP synthase complex consist of a soluble F(1) head domain - the catalytic core - and a membrane F(1) domain - the membrane proton channel. These two domains are linked by a central stalk rotating inside the F(1) region and a stationary peripheral stalk. During catalysis, ATP synthesis in the catalytic domain of F(1) is coupled via a rotary mechanism of the central stalk subunits to proton translocation. In vivo, can only synthesize ATP although its ATP hydrolase activity can be activated artificially in vitro. Part of the complex F(0) domain. Part of the complex F(0) domain and the peripheric stalk, which acts as a stator to hold the catalytic alpha(3)beta(3) subcomplex and subunit a/ATP6 static relative to the rotary elements. The polypeptide is ATP synthase peripheral stalk subunit b, mitochondrial (Homo sapiens (Human)).